The sequence spans 254 residues: Trans-aconitate 2-methyltransferase (254 aa).

The protein belongs to the methyltransferase superfamily. Tam family.

The protein localises to the cytoplasm. The catalysed reaction is trans-aconitate + S-adenosyl-L-methionine = (E)-3-(methoxycarbonyl)pent-2-enedioate + S-adenosyl-L-homocysteine. Its function is as follows. Catalyzes the S-adenosylmethionine monomethyl esterification of trans-aconitate. In Mycobacterium sp. (strain JLS), this protein is Trans-aconitate 2-methyltransferase.